The sequence spans 227 residues: Sensory transduction protein RegX3 (227 aa).

The 114-residue stretch at 3–116 (SVLIVEDEES…ELIARIRAVL (114 aa)) folds into the Response regulatory domain. Asp52 bears the 4-aspartylphosphate mark. Residues 128–227 (DGVLESGPVR…VRGLGYKLEG (100 aa)) constitute a DNA-binding region (ompR/PhoB-type).

Phosphorylated by SenX3.

Its function is as follows. Member of the two-component regulatory system SenX3/RegX3. Specifically binds to the promoter region of the senX3-regX3 operon. The sequence is that of Sensory transduction protein RegX3 from Mycobacterium bovis (strain ATCC BAA-935 / AF2122/97).